Reading from the N-terminus, the 177-residue chain is Adenine phosphoribosyltransferase (177 aa).

This sequence belongs to the purine/pyrimidine phosphoribosyltransferase family. As to quaternary structure, homodimer.

The protein localises to the cytoplasm. The enzyme catalyses AMP + diphosphate = 5-phospho-alpha-D-ribose 1-diphosphate + adenine. The protein operates within purine metabolism; AMP biosynthesis via salvage pathway; AMP from adenine: step 1/1. Its function is as follows. Catalyzes a salvage reaction resulting in the formation of AMP, that is energically less costly than de novo synthesis. In Leptospira biflexa serovar Patoc (strain Patoc 1 / Ames), this protein is Adenine phosphoribosyltransferase.